The following is a 135-amino-acid chain: Glutaredoxin-C4 (135 aa).

The 101-residue stretch at 32–132 (ADFVKKTISS…KLLGVSGNKE (101 aa)) folds into the Glutaredoxin domain. A disulfide bond links Cys-52 and Cys-55.

This sequence belongs to the glutaredoxin family. CPYC subfamily.

It localises to the cytoplasm. Has a glutathione-disulfide oxidoreductase activity in the presence of NADPH and glutathione reductase. Reduces low molecular weight disulfides and proteins. This Arabidopsis thaliana (Mouse-ear cress) protein is Glutaredoxin-C4 (GRXC4).